The sequence spans 123 residues: Fluoride-specific ion channel FluC (123 aa).

A run of 4 helical transmembrane segments spans residues 3-23 (IAWV…LSNA), 34-54 (WGTL…FYLF), 67-87 (LVLV…LETL), and 99-119 (LLNM…GLVV). Na(+) is bound by residues Gly74 and Thr77.

This sequence belongs to the fluoride channel Fluc/FEX (TC 1.A.43) family.

The protein resides in the cell inner membrane. The enzyme catalyses fluoride(in) = fluoride(out). Its activity is regulated as follows. Na(+) is not transported, but it plays an essential structural role and its presence is essential for fluoride channel function. In terms of biological role, fluoride-specific ion channel. Important for reducing fluoride concentration in the cell, thus reducing its toxicity. The protein is Fluoride-specific ion channel FluC of Magnetococcus marinus (strain ATCC BAA-1437 / JCM 17883 / MC-1).